The sequence spans 694 residues: Elongation factor G (694 aa).

In terms of domain architecture, tr-type G spans 9–288; the sequence is SKIRNIGIMA…VIVKWLPSPK (280 aa). GTP is bound by residues 18–25, 82–86, and 136–139; these read AHIDAGKT, DTPGH, and NKMD.

The protein belongs to the TRAFAC class translation factor GTPase superfamily. Classic translation factor GTPase family. EF-G/EF-2 subfamily.

Its subcellular location is the cytoplasm. Catalyzes the GTP-dependent ribosomal translocation step during translation elongation. During this step, the ribosome changes from the pre-translocational (PRE) to the post-translocational (POST) state as the newly formed A-site-bound peptidyl-tRNA and P-site-bound deacylated tRNA move to the P and E sites, respectively. Catalyzes the coordinated movement of the two tRNA molecules, the mRNA and conformational changes in the ribosome. The chain is Elongation factor G from Chlamydia abortus (strain DSM 27085 / S26/3) (Chlamydophila abortus).